The chain runs to 264 residues: Hydroxyethylthiazole kinase (264 aa).

Met-52 contributes to the substrate binding site. ATP contacts are provided by Arg-127 and Thr-173. Gly-200 is a substrate binding site.

The protein belongs to the Thz kinase family. The cofactor is Mg(2+).

The catalysed reaction is 5-(2-hydroxyethyl)-4-methylthiazole + ATP = 4-methyl-5-(2-phosphooxyethyl)-thiazole + ADP + H(+). The protein operates within cofactor biosynthesis; thiamine diphosphate biosynthesis; 4-methyl-5-(2-phosphoethyl)-thiazole from 5-(2-hydroxyethyl)-4-methylthiazole: step 1/1. In terms of biological role, catalyzes the phosphorylation of the hydroxyl group of 4-methyl-5-beta-hydroxyethylthiazole (THZ). The protein is Hydroxyethylthiazole kinase of Serratia proteamaculans (strain 568).